Reading from the N-terminus, the 678-residue chain is Serine/threonine-protein kinase PLK (678 aa).

The Protein kinase domain occupies 22–309 (YRPGKLLGKG…VKECLDHSWL (288 aa)). ATP-binding positions include 28 to 36 (LGKGGFAYV) and Lys-51. Asp-145 serves as the catalytic Proton acceptor. Residues Thr-179 and Thr-183 each carry the phosphothreonine; by autocatalysis modification. 2 consecutive POLO box domains span residues 435-516 (YIMS…YLEN) and 563-644 (FLKK…IIKA). Positions 658 to 678 (KDSTKKSASGSSTRQLGQGGE) are disordered. Polar residues predominate over residues 663–678 (KSASGSSTRQLGQGGE).

The protein belongs to the protein kinase superfamily. Ser/Thr protein kinase family. CDC5/Polo subfamily. In terms of assembly, interacts with Kin-13. Autophosphorylated. Autophosphorylation is critical for its function in cell growth, cytokinesis and formation of flagella.

It localises to the cell projection. It is found in the cilium. The protein localises to the flagellum. Its subcellular location is the cytoplasm. The protein resides in the cytoskeleton. It localises to the flagellum basal body. It is found in the flagellum axoneme. The protein localises to the spindle. Its subcellular location is the membrane. The enzyme catalyses L-seryl-[protein] + ATP = O-phospho-L-seryl-[protein] + ADP + H(+). The catalysed reaction is L-threonyl-[protein] + ATP = O-phospho-L-threonyl-[protein] + ADP + H(+). Inhibited by GW843286X (GW), an ATP-competitive inhibitor. Inhibition leads to reduced growth, increased number of cells with more than four nuclei, increased number of cells with condensed nuclei, cell cycle arrest at G2/M or G1/S phase depending on the treatment time with GW, and increased length of membrane-bound portions of the caudal and anterior flagella. Involved in cell cycle. Involved in cell division. Involved in cytokinesis. Involved in flagella biogenesis and in regulation of flagella length in interphase. Involved in formation of median bodies during interphase. Phosphorylates Kin-13 in vitro. Likely regulates microtubule (MT) depolymerizing activity of Kin-13. The chain is Serine/threonine-protein kinase PLK from Giardia intestinalis (strain ATCC 50803 / WB clone C6) (Giardia lamblia).